The sequence spans 61 residues: Small ribosomal subunit protein uS14 (61 aa).

Zn(2+) contacts are provided by C24, C27, C40, and C43.

It belongs to the universal ribosomal protein uS14 family. Zinc-binding uS14 subfamily. Part of the 30S ribosomal subunit. Contacts proteins S3 and S10. It depends on Zn(2+) as a cofactor.

In terms of biological role, binds 16S rRNA, required for the assembly of 30S particles and may also be responsible for determining the conformation of the 16S rRNA at the A site. The sequence is that of Small ribosomal subunit protein uS14 from Anaeromyxobacter dehalogenans (strain 2CP-1 / ATCC BAA-258).